The following is a 589-amino-acid chain: V-type ATP synthase alpha chain 1 (589 aa).

An ATP-binding site is contributed by 239–246; that stretch reads GPFGAGKT.

It belongs to the ATPase alpha/beta chains family.

The catalysed reaction is ATP + H2O + 4 H(+)(in) = ADP + phosphate + 5 H(+)(out). Produces ATP from ADP in the presence of a proton gradient across the membrane. The V-type alpha chain is a catalytic subunit. The polypeptide is V-type ATP synthase alpha chain 1 (atpA1) (Treponema pallidum (strain Nichols)).